Here is a 274-residue protein sequence, read N- to C-terminus: Eukaryotic translation initiation factor 3 subunit G (274 aa).

The RRM domain maps to 192–270; it reads TAIRISNLSN…LILNVEWSKP (79 aa).

This sequence belongs to the eIF-3 subunit G family. Component of the eukaryotic translation initiation factor 3 (eIF-3) complex.

Its subcellular location is the cytoplasm. Functionally, RNA-binding component of the eukaryotic translation initiation factor 3 (eIF-3) complex, which is involved in protein synthesis of a specialized repertoire of mRNAs and, together with other initiation factors, stimulates binding of mRNA and methionyl-tRNAi to the 40S ribosome. The eIF-3 complex specifically targets and initiates translation of a subset of mRNAs involved in cell proliferation. This subunit can bind 18S rRNA. The sequence is that of Eukaryotic translation initiation factor 3 subunit G from Bombyx mori (Silk moth).